A 243-amino-acid chain; its full sequence is Probable transcriptional regulatory protein LCA_1307 (243 aa).

Residues 1 to 21 (MSGHSKWHNIQGRKNAQDAKR) form a disordered region.

The protein belongs to the TACO1 family.

It is found in the cytoplasm. This chain is Probable transcriptional regulatory protein LCA_1307, found in Latilactobacillus sakei subsp. sakei (strain 23K) (Lactobacillus sakei subsp. sakei).